The primary structure comprises 186 residues: Serine hydrolase RBBP9 (186 aa).

The interval 63–67 is involved in binding to RB1; sequence LHCDE. Active-site charge relay system residues include S75, D138, and H165.

Belongs to the RBBP9 family. In terms of assembly, interacts with RB1; the interaction disrupts RB1 binding to E2F1. Interacts with RBL1 and RBL2. As to expression, highly expressed in the spleen, testis and kidney. Also found in the heart, liver, lung and brain.

It catalyses the reaction valacyclovir + H2O = acyclovir + L-valine + H(+). Serine hydrolase. Catalyzes the hydrolytic activation of amino acid ester of the antiviral prodrug valacyclovir to its corresponding active drug, acyclovir. May negatively regulate basal or autocrine TGF-beta signaling by suppressing SMAD2-SMAD3 phosphorylation. May play a role in the transformation process due to its capacity to confer resistance to the growth-inhibitory effects of TGF-beta through interaction with RB1 and the subsequent displacement of E2F1. In Rattus norvegicus (Rat), this protein is Serine hydrolase RBBP9.